The primary structure comprises 333 residues: MEVAEANSPTEEEEEEEEEGEETISEPRPHTRSNPEGAEDRALGAQASVGSRSEGEGEAATADGGAASVPGAGPKPWQVPASASEVQIRTPRVNCPEKVIICLDLSEEMSVPKLESFNGSRTNALNVSQKMVEMFVRTKHKIDKSHEFALVVVNDDSAWLSGLTSDPRELCSCLYDLETASCSTFNLEGLFSLIQQKTELPVTENVQTIPPPYVVRTILVYSRPPCQPQFSLTEPMKKMFQCPYFFFDIVYIHNGTEEKEEDMSWKDMFAFMGSLDTKGASYKYEVALAGPALELHNCMAKLLAHPLQRPCQTHASYSLLEEDEEAGEEEATV.

Met1 carries the N-acetylmethionine modification. Positions 1-85 are disordered; sequence MEVAEANSPT…PWQVPASASE (85 aa). The residue at position 8 (Ser8) is a Phosphoserine. The segment covering 10–24 has biased composition (acidic residues); it reads TEEEEEEEEEGEETI. Residues Ser33 and Ser53 each carry the phosphoserine modification. Positions 58-67 are enriched in low complexity; it reads EAATADGGAA. The segment at 99-302 is VWFA-like; that stretch reads VIICLDLSEE…LELHNCMAKL (204 aa).

The protein belongs to the BABAM1 family. As to quaternary structure, component of the ARISC complex, at least composed of UIMC1/RAP80, ABRAXAS1, BRCC3/BRCC36, BABAM2 and BABAM1/NBA1. Component of the BRCA1-A complex, at least composed of BRCA1, BARD1, UIMC1/RAP80, ABRAXAS1, BRCC3/BRCC36, BABAM2 and BABAM1/NBA1. In the BRCA1-A complex, interacts directly with ABRAXAS1 and BABAM2. Component of the BRISC complex, at least composed of ABRAXAS2, BRCC3/BRCC36, BABAM2 and BABAM1/NBA1. Identified in a complex with SHMT2 and the other subunits of the BRISC complex.

The protein localises to the cytoplasm. It is found in the nucleus. Component of the BRCA1-A complex, a complex that specifically recognizes 'Lys-63'-linked ubiquitinated histones H2A and H2AX at DNA lesions sites, leading to target the BRCA1-BARD1 heterodimer to sites of DNA damage at double-strand breaks (DSBs). The BRCA1-A complex also possesses deubiquitinase activity that specifically removes 'Lys-63'-linked ubiquitin on histones H2A and H2AX. In the BRCA1-A complex, it is required for the complex integrity and its localization at DSBs. Component of the BRISC complex, a multiprotein complex that specifically cleaves 'Lys-63'-linked ubiquitin in various substrates. In these 2 complexes, it is probably required to maintain the stability of BABAM2 and help the 'Lys-63'-linked deubiquitinase activity mediated by BRCC3/BRCC36 component. The BRISC complex is required for normal mitotic spindle assembly and microtubule attachment to kinetochores via its role in deubiquitinating NUMA1. Plays a role in interferon signaling via its role in the deubiquitination of the interferon receptor IFNAR1; deubiquitination increases IFNAR1 activity by enhancing its stability and cell surface expression. Down-regulates the response to bacterial lipopolysaccharide (LPS) via its role in IFNAR1 deubiquitination. The sequence is that of BRISC and BRCA1-A complex member 1 (Babam1) from Mus musculus (Mouse).